Reading from the N-terminus, the 352-residue chain is C-C chemokine receptor type 5 (352 aa).

Over 1–30 (MDYQVSSPTYDIDYYTSGPCQKINVKQIAA) the chain is Extracellular. Position 3 is a sulfotyrosine (Tyr-3). Ser-6 and Ser-7 each carry an O-linked (GalNAc...) serine glycan. Residues Tyr-10, Tyr-14, and Tyr-15 each carry the sulfotyrosine modification. Cystine bridges form between Cys-20–Cys-269 and Cys-101–Cys-178. The chain crosses the membrane as a helical span at residues 31–58 (RLLPPLYSLVFIFGFVGNMLVILILINC). Over 59–68 (KRLKSMTDIY) the chain is Cytoplasmic. A helical transmembrane segment spans residues 69 to 89 (LLNLAISDLFFLLTVPFWAHY). The Extracellular portion of the chain corresponds to 90-102 (AAAQWDFGNTMCQ). The chain crosses the membrane as a helical span at residues 103 to 124 (LLTGLYFIGFFSGIFFIILLTI). Over 125–141 (DRYLAIVHAVFALKART) the chain is Cytoplasmic. A helical transmembrane segment spans residues 142–166 (VTFGVVTSVITWVVAVFASLPGIIF). At 167–198 (TRSQKEGLHYTCSSHFPYSQYQFWKNFQTLKI) the chain is on the extracellular side. The helical transmembrane segment at 199–218 (VILGLVLPLLVMVICYSGIL) threads the bilayer. Residues 219–235 (KTLLRCRNEKKRHRAVR) lie on the Cytoplasmic side of the membrane. Residues 236 to 260 (LIFTIMIVYFLFWAPYNIVLLLNTF) traverse the membrane as a helical segment. Residues 261 to 277 (QEFFGLNNCSSSNRLDQ) are Extracellular-facing. Residues 278–301 (AMQVTETLGMTHCCINPIIYAFVG) form a helical membrane-spanning segment. The Cytoplasmic segment spans residues 302-352 (EKFRNYLLVFFQKHIAKHFCKCCSIFQQEAPERASSVYTRSTGEQEISVGL). S-palmitoyl cysteine attachment occurs at residues Cys-321, Cys-323, and Cys-324. Ser-336, Ser-337, Ser-342, and Ser-349 each carry phosphoserine; by BARK1.

The protein belongs to the G-protein coupled receptor 1 family. As to quaternary structure, interacts with PRAF2. Efficient ligand binding to CCL3/MIP-1alpha and CCL4/MIP-1beta requires sulfation, O-glycosylation and sialic acid modifications. Glycosylation on Ser-6 is required for efficient binding of CCL4. Interacts with GRK2. Interacts with ARRB1 and ARRB2. Interacts with CNIH4. Interacts with S100A4; this interaction stimulates T-lymphocyte chemotaxis. In terms of processing, sulfated on at least 2 of the N-terminal tyrosines. Sulfation is required for efficient binding of the chemokines, CCL3 and CCL4. Palmitoylation in the C-terminal is important for cell surface expression. Post-translationally, phosphorylation on serine residues in the C-terminal is stimulated by binding CC chemokines especially by APO-RANTES. In terms of processing, O-glycosylated, but not N-glycosylated. Ser-6 appears to be the major site even if Ser-7 may be also O-glycosylated. Also sialylated glycans present which contribute to chemokine binding. Thr-16 and Ser-17 may also be glycosylated and, if so, with small moieties such as a T-antigen.

Its subcellular location is the cell membrane. Functionally, receptor for a number of inflammatory CC-chemokines including CCL3/MIP-1-alpha, CCL4/MIP-1-beta and RANTES and subsequently transduces a signal by increasing the intracellular calcium ion level. May play a role in the control of granulocytic lineage proliferation or differentiation. Participates in T-lymphocyte migration to the infection site by acting as a chemotactic receptor. In Hylobates moloch (Silvery gibbon), this protein is C-C chemokine receptor type 5 (CCR5).